The primary structure comprises 409 residues: Phenoxybenzoate dioxygenase subunit alpha (409 aa).

A Rieske domain is found at 45-149 (WQPVALSADV…VEERYGLVFA (105 aa)). [2Fe-2S] cluster contacts are provided by Cys85, His87, Cys104, and His107. 2 residues coordinate Fe cation: His210 and His215.

The protein belongs to the bacterial ring-hydroxylating dioxygenase alpha subunit family. As to quaternary structure, this dioxygenase system consists of two proteins: the alpha subunit (PobA) and a subunit (PobB) that acts as a ferredoxin and a ferredoxin reductase. [2Fe-2S] cluster serves as cofactor. Fe cation is required as a cofactor.

It participates in aromatic compound metabolism; carboxydiphenyl ether degradation. In terms of biological role, degrades exclusively diarylether compounds having carboxyl groups in the 3- or 4-position. Yields a hemiacetal that spontaneously hydrolyzes to phenol and protocatechuate. This is Phenoxybenzoate dioxygenase subunit alpha (pobA) from Ectopseudomonas oleovorans (Pseudomonas oleovorans).